The primary structure comprises 1133 residues: Nuclear pore complex-interacting protein family member B5 (1133 aa).

Residues 60–84 (WLHVIIAFPTSYKVVITLWIVYLWV) form a helical membrane-spanning segment. Disordered regions lie at residues 241–262 (NRMGHQPPPPTQQHSITDNSLS), 290–575 (LTPL…IKTP), and 868–1133 (ERLR…RRLS). Over residues 252-262 (QQHSITDNSLS) the composition is skewed to polar residues. Residues 349-359 (PLPPSALPSAP) show a composition bias toward pro residues. Basic and acidic residues-rich tracts occupy residues 406-416 (DNIKTPAERLR), 448-458 (DNIKTPAERLR), 490-500 (DNIKTPAERLR), 528-538 (DNIKTPAERLR), 903-913 (DNIKTPAERLR), 945-955 (DNIKTPAERLR), and 987-997 (DNIKTPAERLR).

The protein belongs to the NPIP family.

The protein localises to the membrane. This Homo sapiens (Human) protein is Nuclear pore complex-interacting protein family member B5 (NPIPB5).